The chain runs to 34 residues: Potassium channel toxin alpha-KTx 6 hetlaxin (34 aa).

Cystine bridges form between C3-C24, C9-C29, C13-C31, and C19-C34. C34 is modified (cysteine amide).

Contains 4 disulfide bonds. As to expression, expressed by the venom gland.

The protein resides in the secreted. Binds to voltage-gated potassium channels Kv1.3/KCNA3 (IC(50)=0.48 uM) and Kv1.1/KCNA1 (IC(50)=6.7 uM) and inhibits channel activity. This Heterometrus laoticus (Thai giant scorpion) protein is Potassium channel toxin alpha-KTx 6 hetlaxin.